Here is a 433-residue protein sequence, read N- to C-terminus: Serine--tRNA ligase (433 aa).

Residue 235–237 (TSE) coordinates L-serine. Residue 266–268 (RSE) participates in ATP binding. Residue Glu-289 participates in L-serine binding. ATP is bound at residue 353-356 (EISS). Position 388 (Ser-388) interacts with L-serine.

It belongs to the class-II aminoacyl-tRNA synthetase family. Type-1 seryl-tRNA synthetase subfamily. As to quaternary structure, homodimer. The tRNA molecule binds across the dimer.

The protein resides in the cytoplasm. It catalyses the reaction tRNA(Ser) + L-serine + ATP = L-seryl-tRNA(Ser) + AMP + diphosphate + H(+). The enzyme catalyses tRNA(Sec) + L-serine + ATP = L-seryl-tRNA(Sec) + AMP + diphosphate + H(+). It functions in the pathway aminoacyl-tRNA biosynthesis; selenocysteinyl-tRNA(Sec) biosynthesis; L-seryl-tRNA(Sec) from L-serine and tRNA(Sec): step 1/1. Catalyzes the attachment of serine to tRNA(Ser). Is also able to aminoacylate tRNA(Sec) with serine, to form the misacylated tRNA L-seryl-tRNA(Sec), which will be further converted into selenocysteinyl-tRNA(Sec). This Burkholderia pseudomallei (strain 1106a) protein is Serine--tRNA ligase.